The primary structure comprises 24 residues: Xenoposin-precursor fragment B1 (24 aa).

In terms of tissue distribution, expressed by the skin glands.

Its subcellular location is the secreted. Functionally, has antibacterial activity. The protein is Xenoposin-precursor fragment B1 of Xenopus borealis (Kenyan clawed frog).